The following is a 1253-amino-acid chain: MKNLVTHLHHVFPNVNGSIKALAFNSISDKIYVVCGLDNENPGIEIYEISENDDVSKLVEFDSPSFVSDNGDIDEIQSMQFLGEPMAICLSLKGGDIVMVKVDPSPEEAPWEIIGNVENGIVASCWSTDEQVFCIITGGDTILFMTKNFDIISETSLSDADLNEFNKHISVGWGRSETQFRGKRVRAKLRDPTLPEKIDEGKLSDVDDGKTYICWRGDSQYVSINRLEKGPRRAIRVYSREGLLDSISEPQDGQQSLLSWKPSGSVLATIKSDSSDNSSKVIFFERNGLRHGEFSLRRREDEKYTGLAWNVSSSILAVSTENSVMLWTTGNYHWYLKKEINIPQNALISWHPEHANTLYITGKNHIEKVVFDLKYVTEFSTSPNDFGLIPVIDGSSLLVTPLSLCNIPPPMCRYKLSLDYNVQMTSINATSDMLFAADDRRLTAFTFNSQEDIAKFGEFDISTYAEGLNFKSLLGLSGNQVLLLADGTNNCSKFFVFQCDEDNESLKLLASESFESCILNASYCSEMLFFQTSSGKLISYNLNVKSIESISLSFPKPCSDFVVVPVHETFVPIGLTSYGRLYAEQRLLSTGVLSFFCTERFVLFTTTKNLLKFVHLVSTVDDLQVVEDDAVDRHDERCRVVERGSKIVASMPSKMAVVLQMPRGNLETIYPRIMVLDGVRTYIKALKYGDAFKVCRTHRLDLNILFDYDPDLFLKNIPVFVDGLYRVDYLDLFLTSLKPENVTTGMYSDTSKSQSQQSVTTIDNKVNLLCKIIREHLTSKYGDTHFQAIITSYLCESPPKIEAALGMISGLIKAQSETVDLAIEHMCFLVDVNMLFDHALGLYDLKLALLIAQQSQKDPREYVPFLHEFQKQESLRRKFNIDCYLKRYERALGHLKEMENAFDEFKNFTIQHKLYPRALELYKYDKEAQKEVLIIFAQYLRENGKSNEAAIAYESVGKISEAIEAYKSAGMWRECLSILQQTTNSEDLIRETAEDLASLCIEKREHCDAGSINLLYLSNPREAVIQMCKGSQYSEAIRIARATGDSSIYKDLLISVLGESFGEASELVADFRNQIKSQTERILVLREKKKEDPISWMEGTMEDQTPDDISLASTSLSTNRSLYTQYTKSSNSSKMTRNTSKNNRRLERKRARGKKGTVFEEEYLVNSLRRLIARVEEIRPEVHRLLEALVRCNMTTQASELQRNFANVIGTIGEKVIPILSVPVSTFETALGEQPQAPVVPNVKPFEKLSILI.

Residues 830–1253 (VDVNMLFDHA…KPFEKLSILI (424 aa)) form a mediates dimerization region. A compositionally biased stretch (polar residues) spans 1126–1141 (YTKSSNSSKMTRNTSK). The segment at 1126–1153 (YTKSSNSSKMTRNTSKNNRRLERKRARG) is disordered. A required for binding to tRNA region spans residues 1137–1155 (RNTSKNNRRLERKRARGKK). The segment covering 1142–1153 (NNRRLERKRARG) has biased composition (basic residues).

It belongs to the ELP1/IKA1 family. In terms of assembly, homodimer. Component of the elongator complex.

Its subcellular location is the cytoplasm. The protein operates within tRNA modification; 5-methoxycarbonylmethyl-2-thiouridine-tRNA biosynthesis. Functionally, component of the elongator complex, a multiprotein complex which is required for multiple tRNA modifications, including mcm5U (5-methoxycarbonylmethyl uridine), mcm5s2U (5-methoxycarbonylmethyl-2-thiouridine), and ncm5U (5-carbamoylmethyl uridine). The elongator complex catalyzes formation of carboxymethyluridine in the wobble base at position 34 in tRNAs. ELP1 binds to tRNA, mediating interaction of the elongator complex with tRNA. The polypeptide is Elongator complex protein 1 (Schizosaccharomyces pombe (strain 972 / ATCC 24843) (Fission yeast)).